The following is a 122-amino-acid chain: Large ribosomal subunit protein uL14 (122 aa).

The protein belongs to the universal ribosomal protein uL14 family. As to quaternary structure, part of the 50S ribosomal subunit. Forms a cluster with proteins L3 and L19. In the 70S ribosome, L14 and L19 interact and together make contacts with the 16S rRNA in bridges B5 and B8.

Its function is as follows. Binds to 23S rRNA. Forms part of two intersubunit bridges in the 70S ribosome. The chain is Large ribosomal subunit protein uL14 from Thermodesulfovibrio yellowstonii (strain ATCC 51303 / DSM 11347 / YP87).